Here is a 387-residue protein sequence, read N- to C-terminus: MDQRKGSGSDANGGLAEATASRLRFEDPDEVMEENPAAAAATVGAEEEGGEGGGGEEVIGSDKTSADYYFDSYSHFGIHEEMLKDVVRTKSYQNVITQNSFLFKDKIVLDVGAGTGILSLFCAKAGAKHVYAIECSQMADMAKEIVKTNGYSNVITVIKGKVEEIELPVPKVDVIISEWMGYFLLFENMLNTVLYARDKWLADGGVVLPDKASLHLTAIEDAEYKEDKIEFWNNVYGFDMRCIKKQAMMEPLVDTVDANQIVTNCQLLKTMDISKMTPGDASFTVPFKLVAERNDYIHALVAYFNVSFTKCHKMMGFSTGPRSKATHWKQTVLYLEDVLTICEGETITGSMTVTPNKKNPRDIDIKLCYALSGHRCQVSRTQHYKMR.

A disordered region spans residues 1–60 (MDQRKGSGSDANGGLAEATASRLRFEDPDEVMEENPAAAAATVGAEEEGGEGGGGEEVIG). The segment covering 34 to 44 (ENPAAAAATVG) has biased composition (low complexity). The SAM-dependent MTase PRMT-type domain occupies 66-387 (ADYYFDSYSH…VSRTQHYKMR (322 aa)). Histidine 79, arginine 88, glycine 112, glutamate 134, and glutamate 163 together coordinate S-adenosyl-L-methionine. Catalysis depends on residues glutamate 178 and glutamate 187.

It belongs to the class I-like SAM-binding methyltransferase superfamily. Protein arginine N-methyltransferase family.

Its subcellular location is the nucleus. It catalyses the reaction L-arginyl-[protein] + S-adenosyl-L-methionine = N(omega)-methyl-L-arginyl-[protein] + S-adenosyl-L-homocysteine + H(+). The catalysed reaction is L-arginyl-[protein] + 2 S-adenosyl-L-methionine = N(omega),N(omega)-dimethyl-L-arginyl-[protein] + 2 S-adenosyl-L-homocysteine + 2 H(+). Arginine methyltransferase that methylates (mono and asymmetric dimethylation) the guanidino nitrogens of arginyl residues present in target proteins. The polypeptide is Protein arginine N-methyltransferase 1 (PRMT1) (Oryza sativa subsp. indica (Rice)).